The primary structure comprises 417 residues: NADH-quinone oxidoreductase subunit D (417 aa).

It belongs to the complex I 49 kDa subunit family. NDH-1 is composed of 14 different subunits. Subunits NuoB, C, D, E, F, and G constitute the peripheral sector of the complex.

Its subcellular location is the cell inner membrane. The enzyme catalyses a quinone + NADH + 5 H(+)(in) = a quinol + NAD(+) + 4 H(+)(out). In terms of biological role, NDH-1 shuttles electrons from NADH, via FMN and iron-sulfur (Fe-S) centers, to quinones in the respiratory chain. The immediate electron acceptor for the enzyme in this species is believed to be ubiquinone. Couples the redox reaction to proton translocation (for every two electrons transferred, four hydrogen ions are translocated across the cytoplasmic membrane), and thus conserves the redox energy in a proton gradient. The polypeptide is NADH-quinone oxidoreductase subunit D (Hydrogenovibrio crunogenus (strain DSM 25203 / XCL-2) (Thiomicrospira crunogena)).